Here is a 92-residue protein sequence, read N- to C-terminus: Cell division protein FtsB (92 aa).

The Cytoplasmic segment spans residues 1-3; the sequence is MRL. Residues 4-21 traverse the membrane as a helical segment; sequence LILILLSVLVLFQHDFWF. The Periplasmic segment spans residues 22–92; the sequence is GSNGFLDYRQ…VFYHIVKESK (71 aa). Residues 28–63 are a coiled coil; it reads DYRQNAEKIKENQAENEKLSQRNQRINAEIQGLTKG.

This sequence belongs to the FtsB family. As to quaternary structure, part of a complex composed of FtsB, FtsL and FtsQ.

The protein resides in the cell inner membrane. Its function is as follows. Essential cell division protein. May link together the upstream cell division proteins, which are predominantly cytoplasmic, with the downstream cell division proteins, which are predominantly periplasmic. The protein is Cell division protein FtsB of Haemophilus influenzae (strain PittEE).